Consider the following 181-residue polypeptide: MSTGRRVFVLRIGHRPVRDHRVTTHVGLVARAFGADGIFLEESVEESVIRTLRNVVENWGGDFKVLTTRDPRETVANWKKNGGIVVHLTMYGENISEELINLISGQGKDILVVVGGEKVPRWLFEEADFNVAIGNQPHSEVAALAVFLDRLFKGEELRREFPGAKLSIIPSKRGKIVVRRE.

S-adenosyl-L-methionine-binding positions include L88, 115–119 (GGEKV), and 133–140 (IGNQPHSE).

This sequence belongs to the aTrm56 family. Homodimer.

The protein resides in the cytoplasm. The catalysed reaction is cytidine(56) in tRNA + S-adenosyl-L-methionine = 2'-O-methylcytidine(56) in tRNA + S-adenosyl-L-homocysteine + H(+). Its function is as follows. Specifically catalyzes the AdoMet-dependent 2'-O-ribose methylation of cytidine at position 56 in tRNAs. This is tRNA (cytidine(56)-2'-O)-methyltransferase from Thermofilum pendens (strain DSM 2475 / Hrk 5).